Consider the following 315-residue polypeptide: Olfactory receptor 3A10 (315 aa).

Topologically, residues 1–28 (MEPGAWGNRTAVTDFILLGLTGNVRLQP) are extracellular. N8 is a glycosylation site (N-linked (GlcNAc...) asparagine). A helical membrane pass occupies residues 29 to 49 (ILFVVFFFAYIVTVGGNLSIL). Residues 50–68 (AAIFVEPKLHTPMYYFLGN) are Cytoplasmic-facing. Residues 69–89 (LSLLDIGCISVTVPPMLVCLL) form a helical membrane-spanning segment. Topologically, residues 90–97 (AHECRVPY) are extracellular. A helical membrane pass occupies residues 98–118 (AACISQLFFFHLLAGVDCHLL). A disulfide bond links C100 and C192. Residues 119–145 (TAMAYDRYLAICQPLTYSTRMSREVQG) are Cytoplasmic-facing. A helical transmembrane segment spans residues 146–166 (TLVGICCTVSFINALTHTVAV). Residues 167–200 (SVLDFCGPNVVNHFYCDLPPLFQLSCSSIYLNGQ) lie on the Extracellular side of the membrane. Residues 201–221 (LLFVGATFMGVVPMILISVSY) traverse the membrane as a helical segment. Residues 222 to 239 (AHVAAAVLRIRSTEGRKK) are Cytoplasmic-facing. The helical transmembrane segment at 240-260 (AFSTCGSHLTVVCIFYGTGFF) threads the bilayer. Residues 261-274 (SYMRLGSVSASDKD) are Extracellular-facing. Residues 275-295 (KGIGILNTILSPMLNPLIYSL) traverse the membrane as a helical segment. The Cytoplasmic segment spans residues 296 to 315 (RNPDVQGALKRVLTGKRYPV).

Belongs to the G-protein coupled receptor 1 family.

The protein localises to the cell membrane. Functionally, odorant receptor. The chain is Olfactory receptor 3A10 from Mus musculus (Mouse).